Consider the following 212-residue polypeptide: Ropporin-1 (212 aa).

The RIIa domain occupies 12–43 (PELPELLKQFTKAAIRTQPPDLIQWAAEYFGA). Phosphoserine is present on serine 56. Positions 209 to 212 (VRLE) are interaction with RHPN1.

This sequence belongs to the ropporin family. In terms of assembly, homodimer. Interacts with AKAP3. May interact with SPA17. Interacts with RHPN1. Interacts with FSCB; the interaction increases upon spermatozoa capacitation conditions. Interacts with CFAP61. Sumoylated, sumoylation decreases upon spermatozoa capacitation conditions.

Its subcellular location is the cell projection. The protein localises to the cilium. It is found in the flagellum. Its function is as follows. Important for male fertility. With ROPN1L, involved in fibrous sheath integrity and sperm motility, plays a role in PKA-dependent signaling processes required for spermatozoa capacitation. The chain is Ropporin-1 (Ropn1) from Rattus norvegicus (Rat).